Consider the following 378-residue polypeptide: Glycerate kinase (378 aa).

Belongs to the glycerate kinase type-1 family.

It catalyses the reaction (R)-glycerate + ATP = (2R)-3-phosphoglycerate + ADP + H(+). In Haemophilus influenzae (strain ATCC 51907 / DSM 11121 / KW20 / Rd), this protein is Glycerate kinase (glxK).